Reading from the N-terminus, the 559-residue chain is Membrane protein insertase YidC (559 aa).

6 helical membrane-spanning segments follow: residues 5-25 (IVNLVAAIVLSLGIIFGWQYF), 332-352 (AIDFGWFYIITKPVFYAMNFF), 355-375 (YVGNFGISILIVTVIIKLLMF), 429-449 (LPILVQIPVFFSIYKVLYVTI), 474-494 (LFGLLHFSLPSFLMIGAWPIL), and 520-540 (FMPLVFLVMFSSFPAGLLIYW).

Belongs to the OXA1/ALB3/YidC family. Type 1 subfamily. Interacts with the Sec translocase complex via SecD. Specifically interacts with transmembrane segments of nascent integral membrane proteins during membrane integration.

It localises to the cell inner membrane. In terms of biological role, required for the insertion and/or proper folding and/or complex formation of integral membrane proteins into the membrane. Involved in integration of membrane proteins that insert both dependently and independently of the Sec translocase complex, as well as at least some lipoproteins. Aids folding of multispanning membrane proteins. The sequence is that of Membrane protein insertase YidC from Rickettsia bellii (strain OSU 85-389).